The following is a 657-amino-acid chain: MSPRVGVFVCYCGANINGVVDCEAVRDFAEKLDGVVVAKTYPFMCADPGQNLIKEAIKEYNLDRVVVAACTPKIHEPTFRNCIKEAGLSPYYLEFVNIREHCSFVHMNDREKATKKAMELVAGAVERAKRLEDVPQKIVEVDKSCLIIGGGIAGIQAALDLGDQGYKVYLVEKEPSIGGRMAQLAKTFPTDDCALUILAPKMVSVANHPNVELITYAEVKNVEGFIGNFEVTIEKKPRYVDENICTGCGACAAVCPIEVPNEFDLGLGTRKAIYVPFAQAVPLVYTIDMDHCIRCGLCEKACGPGAIRYDQKPEEIKLKVGTIICAVGYDEFDATLKEEYGYGVYDNVITTLELERMINPAGPTGGHEIRPSDGKHPHRVVFIQCVGSRDAKVGKHYCSRICCMFALKNAQLIKQHDPSTEVYICYMDIRSFGKGYEEYYRRAQEQFGVKFIRGRPACIMEDPETKNLIVRVEDTLLGEIVEIEADLVVLSAGLSPRPDNPKLAKMLGLELSPDGFFKELHPKLAPVNTKVDGIAIAGVAQGPKDIPDTVAQAKGAASAVSIPMAQGQFRIEMIRAVVDEDVCGGCQVCAKMCPYNAITYVEKDGHLVAQVNDVACKGCGSCAGACPSGAMQLRYYRDEQIISFIDGVLEAHQKLES.

FAD is bound at residue 149–172 (GGGIAGIQAALDLGDQGYKVYLVE). Position 196 (U196) is a non-standard amino acid, selenocysteine. 4Fe-4S ferredoxin-type domains lie at 235 to 266 (KKPR…FDLG), 283 to 312 (LVYT…YDQK), 574 to 603 (IRAV…YVEK), and 607 to 636 (LVAQ…LRYY). [4Fe-4S] cluster-binding residues include C245, C248, C251, C255, C292, C295, C298, C302, C583, C586, C589, C593, C616, C619, C622, and C626.

It belongs to the HdrA family. In terms of assembly, the ferredoxin:CoB-CoM heterodisulfide reductase is composed of three subunits; HdrA, HdrB and HdrC. [4Fe-4S] cluster serves as cofactor. It depends on FAD as a cofactor.

It participates in cofactor metabolism; coenzyme M-coenzyme B heterodisulfide reduction; coenzyme B and coenzyme M from coenzyme M-coenzyme B heterodisulfide: step 1/1. Functionally, part of a complex that catalyzes the reversible reduction of CoM-S-S-CoB to the thiol-coenzymes H-S-CoM (coenzyme M) and H-S-CoB (coenzyme B). This Methanocaldococcus jannaschii (strain ATCC 43067 / DSM 2661 / JAL-1 / JCM 10045 / NBRC 100440) (Methanococcus jannaschii) protein is CoB--CoM heterodisulfide reductase iron-sulfur subunit A (hdrA).